The sequence spans 639 residues: Phosphatidylinositol 3,4,5-trisphosphate 3-phosphatase cnrN (639 aa).

Residues 20-190 form the Phosphatase tensin-type domain; that stretch reads FKSKEMDLDL…NYFKEIVSGS (171 aa). Cysteine 129 (phosphocysteine intermediate) is an active-site residue. One can recognise a C2 tensin-type domain in the interval 195 to 350; it reads EFVLTFRSIE…LQMECRFQNN (156 aa). Disordered stretches follow at residues 243-265, 395-429, 451-498, 519-567, and 598-628; these read INND…NNNN, NNIL…HSTP, SSSG…SCSS, NNNN…RKRK, and FTKK…DPSE. Low complexity-rich tracts occupy residues 244-265, 395-424, 458-486, and 519-554; these read NNDN…NNNN, NNIL…LPSS, NSSR…SRSS, and NNNN…SNSN. Polar residues predominate over residues 598 to 608; it reads FTKKINPNNNE. The segment covering 619–628 has biased composition (basic and acidic residues); the sequence is LKKETNDPSE.

Mg(2+) serves as cofactor.

It carries out the reaction a 1,2-diacyl-sn-glycero-3-phospho-(1D-myo-inositol-3,4,5-trisphosphate) + H2O = a 1,2-diacyl-sn-glycero-3-phospho-(1D-myo-inositol-4,5-bisphosphate) + phosphate. In terms of biological role, protein phosphatase that negatively regulates PI3K-dependent pathways. Regulates cAMP signal transduction to control territory size. During development, a lawn of Dictyostelium cells breaks up into territories where cells aggregate in dendritic streams to form groups of 20'000 cells. In Dictyostelium discoideum (Social amoeba), this protein is Phosphatidylinositol 3,4,5-trisphosphate 3-phosphatase cnrN (cnrN).